A 118-amino-acid polypeptide reads, in one-letter code: Small ribosomal subunit protein eS24 (118 aa).

The protein belongs to the eukaryotic ribosomal protein eS24 family.

The polypeptide is Small ribosomal subunit protein eS24 (Sulfolobus acidocaldarius (strain ATCC 33909 / DSM 639 / JCM 8929 / NBRC 15157 / NCIMB 11770)).